We begin with the raw amino-acid sequence, 695 residues long: Glycine--tRNA ligase beta subunit (695 aa).

The protein belongs to the class-II aminoacyl-tRNA synthetase family. As to quaternary structure, tetramer of two alpha and two beta subunits.

Its subcellular location is the cytoplasm. The catalysed reaction is tRNA(Gly) + glycine + ATP = glycyl-tRNA(Gly) + AMP + diphosphate. The chain is Glycine--tRNA ligase beta subunit from Desulforamulus reducens (strain ATCC BAA-1160 / DSM 100696 / MI-1) (Desulfotomaculum reducens).